The primary structure comprises 232 residues: MKELQTVLKNHFAIEFADKNLLETAFTHTSYANEHRLLKISHNERLEFLGDAVLQLLISEYLYKKYPKKPEGDLSKLRAMIVREESLAGFARDCQFDQFIKLGKGEEKSGGRNRDTILGDAFEAFLGALLLDKDVAKVKEFIYQVMIPKVEAGEFEMITDYKTHLQELLQVNGDVAIRYQVISETGPAHDKVFDVEVLVEGKSIGQGQGRSKKLAEQEAAKNAVEKGLDSCI.

An RNase III domain is found at 5 to 134; that stretch reads QTVLKNHFAI…FLGALLLDKD (130 aa). Glutamate 47 contributes to the Mg(2+) binding site. The active site involves aspartate 51. Mg(2+)-binding residues include aspartate 120 and glutamate 123. Glutamate 123 is a catalytic residue. The DRBM domain maps to 160 to 229; that stretch reads DYKTHLQELL…AKNAVEKGLD (70 aa).

The protein belongs to the ribonuclease III family. As to quaternary structure, homodimer. Requires Mg(2+) as cofactor.

The protein localises to the cytoplasm. The enzyme catalyses Endonucleolytic cleavage to 5'-phosphomonoester.. Functionally, digests double-stranded RNA. Involved in the processing of primary rRNA transcript to yield the immediate precursors to the large and small rRNAs (23S and 16S). Processes some mRNAs, and tRNAs when they are encoded in the rRNA operon. Processes pre-crRNA and tracrRNA of type II CRISPR loci if present in the organism. The sequence is that of Ribonuclease 3 from Streptococcus pneumoniae (strain Hungary19A-6).